A 306-amino-acid chain; its full sequence is tRNA pseudouridine synthase B (306 aa).

The active-site Nucleophile is the aspartate 43.

The protein belongs to the pseudouridine synthase TruB family. Type 1 subfamily.

The catalysed reaction is uridine(55) in tRNA = pseudouridine(55) in tRNA. Responsible for synthesis of pseudouridine from uracil-55 in the psi GC loop of transfer RNAs. This chain is tRNA pseudouridine synthase B, found in Anaplasma marginale (strain St. Maries).